Reading from the N-terminus, the 446-residue chain is Tubulin beta-4 chain (446 aa).

GTP is bound by residues Q11, E69, S138, G142, T143, G144, N204, and N226. E69 contacts Mg(2+). Positions D417–Q426 are enriched in polar residues. A disordered region spans residues D417–E446. Over residues T429–E446 the composition is skewed to acidic residues.

It belongs to the tubulin family. Dimer of alpha and beta chains. A typical microtubule is a hollow water-filled tube with an outer diameter of 25 nm and an inner diameter of 15 nM. Alpha-beta heterodimers associate head-to-tail to form protofilaments running lengthwise along the microtubule wall with the beta-tubulin subunit facing the microtubule plus end conferring a structural polarity. Microtubules usually have 13 protofilaments but different protofilament numbers can be found in some organisms and specialized cells. It depends on Mg(2+) as a cofactor.

The protein localises to the cytoplasm. It localises to the cytoskeleton. Tubulin is the major constituent of microtubules, a cylinder consisting of laterally associated linear protofilaments composed of alpha- and beta-tubulin heterodimers. Microtubules grow by the addition of GTP-tubulin dimers to the microtubule end, where a stabilizing cap forms. Below the cap, tubulin dimers are in GDP-bound state, owing to GTPase activity of alpha-tubulin. This is Tubulin beta-4 chain (TUBB4) from Eleusine indica (Goosegrass).